Here is a 338-residue protein sequence, read N- to C-terminus: Arginine N-succinyltransferase subunit alpha (338 aa).

Belongs to the succinylarginine dihydrolase family. As to quaternary structure, heterotetramer of two alpha and two beta subunits.

The enzyme catalyses succinyl-CoA + L-arginine = N(2)-succinyl-L-arginine + CoA + H(+). It participates in amino-acid degradation; L-arginine degradation via AST pathway; L-glutamate and succinate from L-arginine: step 1/5. In terms of biological role, catalyzes the transfer of succinyl-CoA to arginine to produce N(2)-succinylarginine. Also acts on L-ornithine. This Pseudomonas aeruginosa (strain ATCC 15692 / DSM 22644 / CIP 104116 / JCM 14847 / LMG 12228 / 1C / PRS 101 / PAO1) protein is Arginine N-succinyltransferase subunit alpha (astA).